A 390-amino-acid polypeptide reads, in one-letter code: Na(+)/H(+) antiporter NhaA (390 aa).

11 helical membrane passes run 13 to 33 (FQLE…ALVI), 61 to 81 (LSVH…FVTL), 99 to 119 (LLPI…YVFI), 129 to 149 (GWAI…SLLG), 158 to 178 (VFLT…IAFF), 181 to 201 (GDLS…LLTL), 209 to 229 (FIPY…SGIH), 259 to 279 (AISP…NAGV), 297 to 317 (ILLG…FIAV), 330 to 350 (WLSL…SLFV), and 367 to 387 (IGVL…LLYA).

This sequence belongs to the NhaA Na(+)/H(+) (TC 2.A.33) antiporter family.

The protein resides in the cell inner membrane. The enzyme catalyses Na(+)(in) + 2 H(+)(out) = Na(+)(out) + 2 H(+)(in). Its function is as follows. Na(+)/H(+) antiporter that extrudes sodium in exchange for external protons. This Pelagibacter ubique (strain HTCC1062) protein is Na(+)/H(+) antiporter NhaA.